A 240-amino-acid chain; its full sequence is Ubiquinone biosynthesis O-methyltransferase (240 aa).

Positions 44, 64, 85, and 129 each coordinate S-adenosyl-L-methionine.

This sequence belongs to the methyltransferase superfamily. UbiG/COQ3 family.

It catalyses the reaction a 3-demethylubiquinol + S-adenosyl-L-methionine = a ubiquinol + S-adenosyl-L-homocysteine + H(+). It carries out the reaction a 3-(all-trans-polyprenyl)benzene-1,2-diol + S-adenosyl-L-methionine = a 2-methoxy-6-(all-trans-polyprenyl)phenol + S-adenosyl-L-homocysteine + H(+). Its pathway is cofactor biosynthesis; ubiquinone biosynthesis. Its function is as follows. O-methyltransferase that catalyzes the 2 O-methylation steps in the ubiquinone biosynthetic pathway. This is Ubiquinone biosynthesis O-methyltransferase from Escherichia coli (strain UTI89 / UPEC).